Consider the following 868-residue polypeptide: Probable mixed-linked glucan synthase 3 (868 aa).

Positions 36–68 (ERKAAGGGGGGAKGKHWAAADKGERRAAKECGG) are disordered. Basic and acidic residues predominate over residues 53-68 (AAADKGERRAAKECGG). The next 2 membrane-spanning stretches (helical) occupy residues 86 to 106 (LLHP…LFFG) and 116 to 136 (IMWF…SWLL). Residue Asp211 is part of the active site. Asp412 and Asp414 together coordinate substrate. Asp573 is an active-site residue. The next 6 helical transmembrane spans lie at 649–669 (IYPV…MWLI), 686–706 (LLMI…WAGI), 717–737 (FFMI…VVNL), 771–791 (MLIP…VAIG), 809–829 (IMGL…ALAI), and 837–857 (PIIL…VYVA).

It belongs to the glycosyltransferase 2 family. Plant cellulose synthase-like F subfamily.

It is found in the golgi apparatus membrane. Its function is as follows. May catalyze both beta-1,3 and beta-1,4 glycosidic linkage on beta-D-glucan. Essential for (1,3;1,4)-beta-D-glucans synthesis in grasses and cereals (Poaceae). The mixed-linked glucans (which are not present in walls of dicotyledons or most other monocotyledonous plants) are particularly important constituents of the walls of the starchy endosperm and aleurone cells of cereal grains such as oats, wheat, rice and barley. They can account for up to 70% by weight of the wall. This is Probable mixed-linked glucan synthase 3 (CSLF3) from Oryza sativa subsp. indica (Rice).